The primary structure comprises 359 residues: Peptide chain release factor 1 (359 aa).

Glutamine 235 carries the post-translational modification N5-methylglutamine.

Belongs to the prokaryotic/mitochondrial release factor family. In terms of processing, methylated by PrmC. Methylation increases the termination efficiency of RF1.

Its subcellular location is the cytoplasm. In terms of biological role, peptide chain release factor 1 directs the termination of translation in response to the peptide chain termination codons UAG and UAA. The chain is Peptide chain release factor 1 from Methylibium petroleiphilum (strain ATCC BAA-1232 / LMG 22953 / PM1).